Reading from the N-terminus, the 91-residue chain is Cell division protein FtsB (91 aa).

Topologically, residues 1–3 (MKW) are cytoplasmic. The helical transmembrane segment at 4-21 (LVAVLVVFVAMFQYRLWV) threads the bilayer. The Periplasmic portion of the chain corresponds to 22–91 (GEGSIADVVR…ETFFMIIDDQ (70 aa)). A coiled-coil region spans residues 23-63 (EGSIADVVRLEREIARQEADNERLRERNKQLAAEVDALKTG).

It belongs to the FtsB family. As to quaternary structure, part of a complex composed of FtsB, FtsL and FtsQ.

The protein resides in the cell inner membrane. Essential cell division protein. May link together the upstream cell division proteins, which are predominantly cytoplasmic, with the downstream cell division proteins, which are predominantly periplasmic. The protein is Cell division protein FtsB of Teredinibacter turnerae (strain ATCC 39867 / T7901).